A 75-amino-acid chain; its full sequence is Xibalbin-13 2 (75 aa).

The first 27 residues, methionine 1–alanine 27, serve as a signal peptide directing secretion. The propeptide occupies glutamate 28 to aspartate 30. Disulfide bonds link cysteine 34-cysteine 49, cysteine 41-cysteine 54, cysteine 48-cysteine 65, and cysteine 56-cysteine 63.

It belongs to the xibalbin-13 family. As to expression, expressed by the venom gland and the whole body.

It localises to the secreted. Probable neurotoxin. Strongly inhibits voltage-gated potassium channels (Kv1.1/KCNA1, Kv1.2/KCNA2, Kv1.3/KCNA3, and Kv1.6/KCNA6, with the highest toxicity against Kv1.1 (85.1% inhibition at 1 uM)) and mildly inhibits sodium channels (Nav1.2/SCN2A, Nav1.4/SCN4A, Nav1.5/SCN5A, Nav1.6/SCN8A, and BgNav). Induces activation of protein kinase A type II (PKA-II) and MAP kinase Erk1/2 in primary nociceptive and non-nociceptive sensory neurons. Does not show cytotoxic activity. Does not have an impact on Ca2+, cAMP, and NO signaling in the cell types analyzed. Does not interfere with the adhesion of leukocytes to endothelial cells. The chain is Xibalbin-13 2 from Xibalbanus tulumensis (Blind cave remipede).